A 498-amino-acid polypeptide reads, in one-letter code: ATP synthase subunit beta, chloroplastic (498 aa).

An ATP-binding site is contributed by 172–179 (GGAGVGKT).

The protein belongs to the ATPase alpha/beta chains family. F-type ATPases have 2 components, CF(1) - the catalytic core - and CF(0) - the membrane proton channel. CF(1) has five subunits: alpha(3), beta(3), gamma(1), delta(1), epsilon(1). CF(0) has four main subunits: a(1), b(1), b'(1) and c(9-12).

Its subcellular location is the plastid. The protein resides in the chloroplast thylakoid membrane. The catalysed reaction is ATP + H2O + 4 H(+)(in) = ADP + phosphate + 5 H(+)(out). Its function is as follows. Produces ATP from ADP in the presence of a proton gradient across the membrane. The catalytic sites are hosted primarily by the beta subunits. This chain is ATP synthase subunit beta, chloroplastic, found in Agapanthus africanus (Lily of the Nile).